The primary structure comprises 486 residues: Cardiolipin synthase A (486 aa).

The next 2 membrane-spanning stretches (helical) occupy residues T3–V23 and M38–V58. PLD phosphodiesterase domains are found at residues M219–R246 and E399–S426. Catalysis depends on residues H224, K226, D231, H404, K406, and D411.

The protein belongs to the phospholipase D family. Cardiolipin synthase subfamily. ClsA sub-subfamily.

Its subcellular location is the cell inner membrane. The catalysed reaction is 2 a 1,2-diacyl-sn-glycero-3-phospho-(1'-sn-glycerol) = a cardiolipin + glycerol. Functionally, catalyzes the reversible phosphatidyl group transfer from one phosphatidylglycerol molecule to another to form cardiolipin (CL) (diphosphatidylglycerol) and glycerol. In Shigella flexneri, this protein is Cardiolipin synthase A.